The chain runs to 424 residues: GTPase Obg (424 aa).

The 158-residue stretch at methionine 1 to leucine 158 folds into the Obg domain. In terms of domain architecture, OBG-type G spans alanine 159–proline 329. GTP-binding positions include glycine 165–serine 172, phenylalanine 190–valine 194, aspartate 212–glycine 215, asparagine 282–aspartate 285, and serine 310–alanine 312. Mg(2+) contacts are provided by serine 172 and threonine 192. An OCT domain is found at threonine 347–glutamate 424.

This sequence belongs to the TRAFAC class OBG-HflX-like GTPase superfamily. OBG GTPase family. In terms of assembly, monomer. Mg(2+) serves as cofactor.

It is found in the cytoplasm. In terms of biological role, an essential GTPase which binds GTP, GDP and possibly (p)ppGpp with moderate affinity, with high nucleotide exchange rates and a fairly low GTP hydrolysis rate. Plays a role in control of the cell cycle, stress response, ribosome biogenesis and in those bacteria that undergo differentiation, in morphogenesis control. In Desulfitobacterium hafniense (strain Y51), this protein is GTPase Obg.